The primary structure comprises 81 residues: Photosystem I iron-sulfur center (81 aa).

4Fe-4S ferredoxin-type domains are found at residues 2–31 (SHAV…MVPW) and 39–68 (IAAS…IRVY). 8 residues coordinate [4Fe-4S] cluster: cysteine 11, cysteine 14, cysteine 17, cysteine 21, cysteine 48, cysteine 51, cysteine 54, and cysteine 58.

As to quaternary structure, the cyanobacterial PSI reaction center is composed of one copy each of PsaA,B,C,D,E,F,I,J,K,L,M and X, and forms trimeric complexes. The cofactor is [4Fe-4S] cluster.

The protein localises to the cellular thylakoid membrane. The enzyme catalyses reduced [plastocyanin] + hnu + oxidized [2Fe-2S]-[ferredoxin] = oxidized [plastocyanin] + reduced [2Fe-2S]-[ferredoxin]. Functionally, apoprotein for the two 4Fe-4S centers FA and FB of photosystem I (PSI); essential for photochemical activity. FB is the terminal electron acceptor of PSI, donating electrons to ferredoxin. The C-terminus interacts with PsaA/B/D and helps assemble the protein into the PSI complex. Required for binding of PsaD and PsaE to PSI. PSI is a plastocyanin/cytochrome c6-ferredoxin oxidoreductase, converting photonic excitation into a charge separation, which transfers an electron from the donor P700 chlorophyll pair to the spectroscopically characterized acceptors A0, A1, FX, FA and FB in turn. This is Photosystem I iron-sulfur center from Prochlorococcus marinus (strain MIT 9313).